The sequence spans 308 residues: tRNA pseudouridine synthase B (308 aa).

Aspartate 51 serves as the catalytic Nucleophile.

Belongs to the pseudouridine synthase TruB family. Type 1 subfamily.

It carries out the reaction uridine(55) in tRNA = pseudouridine(55) in tRNA. In terms of biological role, responsible for synthesis of pseudouridine from uracil-55 in the psi GC loop of transfer RNAs. This is tRNA pseudouridine synthase B from Aromatoleum aromaticum (strain DSM 19018 / LMG 30748 / EbN1) (Azoarcus sp. (strain EbN1)).